Consider the following 874-residue polypeptide: Leucine--tRNA ligase (874 aa).

The short motif at 43-53 is the 'HIGH' region element; it reads PYPSGRIHIGH. Positions 614–634 are disordered; that stretch reads LDDGSPVTVGPPEKMSKSKKN. A 'KMSKS' region motif is present at residues 627–631; the sequence is KMSKS. Residue K630 participates in ATP binding.

It belongs to the class-I aminoacyl-tRNA synthetase family.

It localises to the cytoplasm. It carries out the reaction tRNA(Leu) + L-leucine + ATP = L-leucyl-tRNA(Leu) + AMP + diphosphate. The chain is Leucine--tRNA ligase from Azorhizobium caulinodans (strain ATCC 43989 / DSM 5975 / JCM 20966 / LMG 6465 / NBRC 14845 / NCIMB 13405 / ORS 571).